Here is a 165-residue protein sequence, read N- to C-terminus: Type VI lipase immunity protein Tli3 (165 aa).

The N-terminal stretch at 1–21 is a signal peptide; it reads MKCKTLLIACLFGLGSAQALA.

Interacts with the Tle3 toxin.

The protein resides in the periplasm. In terms of biological role, immunity protein that neutralizes the toxicity of the P.aeruginosa antibacterial toxin Tle3 in the periplasm to protect the cell from fratricide intoxication. In Pseudomonas aeruginosa (strain ATCC 15692 / DSM 22644 / CIP 104116 / JCM 14847 / LMG 12228 / 1C / PRS 101 / PAO1), this protein is Type VI lipase immunity protein Tli3.